The chain runs to 202 residues: MSWIENKFEKNFLLSSVDYVFNWARKSSVWPMTFGLACCAIEMITASTARYDIARFGSEVFRPSPRQSDLMIVAGTVTLKMAPVVQRIYEQMPEPKWVMAMGACASVGGPFNTYATLQGVDKIVPVDVYVVGCPPRPENLFYGLLKLQDKIDHMTLAKRPTDVRLDETMLDEFRKSVRIAQAGSTVVIQPAAPPVVPGLQTK.

Residues cysteine 38, cysteine 39, cysteine 104, and cysteine 133 each contribute to the [4Fe-4S] cluster site.

This sequence belongs to the complex I 20 kDa subunit family. NDH-1 is composed of 14 different subunits. Subunits NuoB, C, D, E, F, and G constitute the peripheral sector of the complex. It depends on [4Fe-4S] cluster as a cofactor.

The protein resides in the cell inner membrane. It catalyses the reaction a quinone + NADH + 5 H(+)(in) = a quinol + NAD(+) + 4 H(+)(out). NDH-1 shuttles electrons from NADH, via FMN and iron-sulfur (Fe-S) centers, to quinones in the respiratory chain. The immediate electron acceptor for the enzyme in this species is believed to be ubiquinone. Couples the redox reaction to proton translocation (for every two electrons transferred, four hydrogen ions are translocated across the cytoplasmic membrane), and thus conserves the redox energy in a proton gradient. This Koribacter versatilis (strain Ellin345) protein is NADH-quinone oxidoreductase subunit B 2.